The primary structure comprises 734 residues: DNA-binding protein RFX2 (734 aa).

Positions 1-23 (MQRSEGGSETPSTVALRTSTSAQ) are enriched in polar residues. Positions 1–31 (MQRSEGGSETPSTVALRTSTSAQAPVVQPVP) are disordered. Residues 204-279 (HLQWLLDNYE…YHYYGIRLKP (76 aa)) constitute a DNA-binding region (RFX-type winged-helix). The interval 694–722 (DTSFSDDMTSDGDMSRMSERSLTEPAVKR) is disordered. Residues 706-722 (DMSRMSERSLTEPAVKR) are compositionally biased toward basic and acidic residues.

It belongs to the RFX family. As to quaternary structure, homodimer. Heterodimer; heterodimerizes with other rfx proteins.

The protein localises to the nucleus. It is found in the cytoplasm. Its function is as follows. Transcription factor that acts as a key regulator of ciliogenesis. Specifically regulates expression of genes required for cilium assembly and function. Recognizes and binds the X-box, a regulatory motif with DNA sequence 5'-GTNRCC(0-3N)RGYAAC-3' present on promoters. This Danio rerio (Zebrafish) protein is DNA-binding protein RFX2 (rfx2).